The sequence spans 435 residues: tRNA modification GTPase MnmE (435 aa).

The (6S)-5-formyl-5,6,7,8-tetrahydrofolate site is built by arginine 20, glutamate 77, and lysine 117. The 146-residue stretch at 214–359 folds into the TrmE-type G domain; that stretch reads GFKIVIVGAP…FMKELESFCL (146 aa). GTP-binding positions include 224 to 229, 243 to 249, and 268 to 271; these read NSGKSS, TEEAGTT, and DTAG. Residues serine 228 and threonine 249 each contribute to the Mg(2+) site. Residue lysine 435 participates in (6S)-5-formyl-5,6,7,8-tetrahydrofolate binding.

Belongs to the TRAFAC class TrmE-Era-EngA-EngB-Septin-like GTPase superfamily. TrmE GTPase family. As to quaternary structure, homodimer. Heterotetramer of two MnmE and two MnmG subunits. Requires K(+) as cofactor.

The protein localises to the cytoplasm. Its function is as follows. Exhibits a very high intrinsic GTPase hydrolysis rate. Involved in the addition of a carboxymethylaminomethyl (cmnm) group at the wobble position (U34) of certain tRNAs, forming tRNA-cmnm(5)s(2)U34. The chain is tRNA modification GTPase MnmE from Bartonella henselae (strain ATCC 49882 / DSM 28221 / CCUG 30454 / Houston 1) (Rochalimaea henselae).